A 196-amino-acid polypeptide reads, in one-letter code: Pyridoxine/pyridoxamine 5'-phosphate oxidase (196 aa).

Residues 44–49 (RTVLLK), 59–60 (YT), arginine 65, lysine 66, and glutamine 88 contribute to the FMN site. Lysine 49 contributes to the substrate binding site. Residues tyrosine 106, arginine 110, and serine 114 each contribute to the substrate site. FMN is bound by residues 123–124 (QS) and tryptophan 169. 175 to 177 (RLH) contributes to the substrate binding site. Residue arginine 179 participates in FMN binding.

Belongs to the pyridoxamine 5'-phosphate oxidase family. Homodimer. FMN serves as cofactor.

It catalyses the reaction pyridoxamine 5'-phosphate + O2 + H2O = pyridoxal 5'-phosphate + H2O2 + NH4(+). It carries out the reaction pyridoxine 5'-phosphate + O2 = pyridoxal 5'-phosphate + H2O2. The protein operates within cofactor metabolism; pyridoxal 5'-phosphate salvage; pyridoxal 5'-phosphate from pyridoxamine 5'-phosphate: step 1/1. It functions in the pathway cofactor metabolism; pyridoxal 5'-phosphate salvage; pyridoxal 5'-phosphate from pyridoxine 5'-phosphate: step 1/1. Catalyzes the oxidation of either pyridoxine 5'-phosphate (PNP) or pyridoxamine 5'-phosphate (PMP) into pyridoxal 5'-phosphate (PLP). This chain is Pyridoxine/pyridoxamine 5'-phosphate oxidase, found in Alkalilimnicola ehrlichii (strain ATCC BAA-1101 / DSM 17681 / MLHE-1).